Here is a 381-residue protein sequence, read N- to C-terminus: uncharacterized protein (381 aa).

The interval 176 to 292 (HAAGKIKKSK…EPMVDETPQN (117 aa)) is disordered. Residues 177-186 (AAGKIKKSKN) show a composition bias toward basic residues. Residues 187 to 212 (QKKDGTLSRPLGKKENKSVVKVKIEE) show a composition bias toward basic and acidic residues. Over residues 276–286 (DEEDEDEEPMV) the composition is skewed to acidic residues.

This is an uncharacterized protein from Caenorhabditis elegans.